Reading from the N-terminus, the 584-residue chain is Aspartate--tRNA(Asp/Asn) ligase (584 aa).

Glutamate 174 contacts L-aspartate. Residues 198-201 (QLFK) are aspartate. Arginine 220 provides a ligand contact to L-aspartate. ATP contacts are provided by residues 220–222 (RDE) and glutamine 229. An L-aspartate-binding site is contributed by histidine 447. Glutamate 480 contacts ATP. Arginine 487 is a binding site for L-aspartate. Residue 532–535 (GFDR) coordinates ATP.

Belongs to the class-II aminoacyl-tRNA synthetase family. Type 1 subfamily. As to quaternary structure, homodimer.

The protein resides in the cytoplasm. It carries out the reaction tRNA(Asx) + L-aspartate + ATP = L-aspartyl-tRNA(Asx) + AMP + diphosphate. Functionally, aspartyl-tRNA synthetase with relaxed tRNA specificity since it is able to aspartylate not only its cognate tRNA(Asp) but also tRNA(Asn). Reaction proceeds in two steps: L-aspartate is first activated by ATP to form Asp-AMP and then transferred to the acceptor end of tRNA(Asp/Asn). The protein is Aspartate--tRNA(Asp/Asn) ligase of Endomicrobium trichonymphae.